Reading from the N-terminus, the 436-residue chain is Prenyltransferase nscD (436 aa).

Belongs to the tryptophan dimethylallyltransferase family.

Its pathway is secondary metabolite biosynthesis. In terms of biological role, prenyltransferase; part of the gene cluster that mediates the biosynthesis of neosartoricin B, a prenylated anthracenone that probably exhibits T-cell antiproliferative activity, suggestive of a physiological role as an immunosuppressive agent. The non-reducing polyketide synthase nscA probably synthesizes and cyclizes the decaketide backbone. The hydrolase nscB then mediates the product release through hydrolysis followed by spontaneous decarboxylation. The prenyltransferase nscD catalyzes the addition of the dimethylallyl group to the aromatic C5. The FAD-dependent monooxygenase nscC is then responsible for the stereospecific hydroxylation at C2. Neosartoricin B can be converted into two additional compounds neosartoricins C and D. Neosartoricin C is a spirocyclic compound that is cyclized through the attack of C3 hydroxyl on C14, followed by dehydration. On the other hand, neosartoricin D is a further cyclized compound in which attack of C2 on C14 in neosartoricin C results in the formation of the acetal-containing dioxabicyclo-octanone ring. Both of these compounds are novel and possibly represent related metabolites of the gene cluster. In Trichophyton rubrum (strain ATCC MYA-4607 / CBS 118892) (Athlete's foot fungus), this protein is Prenyltransferase nscD.